The primary structure comprises 321 residues: Iron(3+)-hydroxamate-binding protein YxeB (321 aa).

A signal peptide spans 1 to 20 (MKKNILLVGMLVLLLMFVSA). Cysteine 21 carries N-palmitoyl cysteine lipidation. Cysteine 21 carries S-diacylglycerol cysteine lipidation. Residues 24–33 (TASKGSSSDS) show a composition bias toward low complexity. A disordered region spans residues 24–48 (TASKGSSSDSASEKTEMRTYKSPKG). In terms of domain architecture, Fe/B12 periplasmic-binding spans 58–316 (RIVTDFYAGE…IITDMLIKRA (259 aa)).

This sequence belongs to the bacterial solute-binding protein 8 family. In terms of assembly, the complex is composed of an ATP-binding protein (FhuC), two transmembrane proteins (FhuB and FhuG) and a solute-binding protein (FhuD or YxeB).

Its subcellular location is the cell membrane. The protein localises to the membrane raft. Its function is as follows. Part of the ABC transporter complex FhuCBGD involved in iron(3+)-hydroxamate import. Binds the iron(3+)-hydroxamate complex and transfers it to the membrane-bound permease. Partially required for the transport of desferrioxamine. The polypeptide is Iron(3+)-hydroxamate-binding protein YxeB (yxeB) (Bacillus subtilis (strain 168)).